Reading from the N-terminus, the 288-residue chain is Bifunctional protein MdtA (288 aa).

Residues 129 to 132 (TGPV), 152 to 156 (RKLDK), 195 to 198 (TAGA), and Lys-256 each bind NADP(+).

As to quaternary structure, homotrimer.

The protein resides in the cytoplasm. The catalysed reaction is 5,10-methylenetetrahydromethanopterin + NADP(+) = 5,10-methenyl-5,6,7,8-tetrahydromethanopterin + NADPH. It catalyses the reaction (6R)-5,10-methylene-5,6,7,8-tetrahydrofolate + NADP(+) = (6R)-5,10-methenyltetrahydrofolate + NADPH. It participates in one-carbon metabolism; formaldehyde degradation; formate from formaldehyde (H(4)MPT route): step 2/5. In terms of biological role, catalyzes the dehydrogenation of methylene-H(4)MPT. Can also catalyze the reversible dehydrogenation of methylene-H(4)F with 20-fold lower catalytic efficiency. This Methylorubrum extorquens (strain ATCC 14718 / DSM 1338 / JCM 2805 / NCIMB 9133 / AM1) (Methylobacterium extorquens) protein is Bifunctional protein MdtA.